The primary structure comprises 988 residues: Bifunctional glutamine synthetase adenylyltransferase/adenylyl-removing enzyme (988 aa).

The tract at residues 1–472 is adenylyl removase; it reads MTKRETVERR…RYSALFEQET (472 aa). Positions 476-988 are adenylyl transferase; it reads GEAGNLVFTG…AFVAVVKNGG (513 aa).

This sequence belongs to the GlnE family. Requires Mg(2+) as cofactor.

The catalysed reaction is [glutamine synthetase]-O(4)-(5'-adenylyl)-L-tyrosine + phosphate = [glutamine synthetase]-L-tyrosine + ADP. It catalyses the reaction [glutamine synthetase]-L-tyrosine + ATP = [glutamine synthetase]-O(4)-(5'-adenylyl)-L-tyrosine + diphosphate. In terms of biological role, involved in the regulation of glutamine synthetase GlnA, a key enzyme in the process to assimilate ammonia. When cellular nitrogen levels are high, the C-terminal adenylyl transferase (AT) inactivates GlnA by covalent transfer of an adenylyl group from ATP to specific tyrosine residue of GlnA, thus reducing its activity. Conversely, when nitrogen levels are low, the N-terminal adenylyl removase (AR) activates GlnA by removing the adenylyl group by phosphorolysis, increasing its activity. The regulatory region of GlnE binds the signal transduction protein PII (GlnB) which indicates the nitrogen status of the cell. The sequence is that of Bifunctional glutamine synthetase adenylyltransferase/adenylyl-removing enzyme from Agrobacterium fabrum (strain C58 / ATCC 33970) (Agrobacterium tumefaciens (strain C58)).